We begin with the raw amino-acid sequence, 189 residues long: Dihydrofolate reductase (189 aa).

Residues 3-184 form the DHFR domain; it reads SLNSIVAVCQ…IQYKFEVYQK (182 aa). Residues Ala-9 and 15–21 contribute to the NADP(+) site; that span reads GIGKDGN. Residue 30–35 participates in substrate binding; it reads EYKYFQ. 54 to 56 provides a ligand contact to NADP(+); the sequence is KKT. The substrate site is built by Asn-64 and Arg-70. Residues 76–78 and 116–123 each bind NADP(+); these read SRE and GGTAVYKA.

This sequence belongs to the dihydrofolate reductase family.

It catalyses the reaction (6S)-5,6,7,8-tetrahydrofolate + NADP(+) = 7,8-dihydrofolate + NADPH + H(+). It functions in the pathway cofactor biosynthesis; tetrahydrofolate biosynthesis; 5,6,7,8-tetrahydrofolate from 7,8-dihydrofolate: step 1/1. Functionally, key enzyme in folate metabolism. Contributes to the de novo mitochondrial thymidylate biosynthesis pathway. Catalyzes an essential reaction for de novo glycine and purine synthesis, and for DNA precursor synthesis. May bind to mRNA. The polypeptide is Dihydrofolate reductase (DHFR) (Gallus gallus (Chicken)).